The chain runs to 1132 residues: BTB/POZ domain-containing protein 7 (1132 aa).

Polar residues predominate over residues 1–10 (MGANASNYPH). The segment at 1–24 (MGANASNYPHSCSPRVGGNSQAQQ) is disordered. Residue Gly2 is the site of N-myristoyl glycine attachment. BTB domains lie at 142-211 (TDVD…GMED) and 247-341 (YDVV…DLSV). Positions 413–479 (YGSKWVHRQA…WGEHQLMKRI (67 aa)) constitute a BACK domain. Ser722 is subject to Phosphoserine. Disordered regions lie at residues 897–1019 (LSQS…HLHR) and 1035–1132 (QRSD…KSAL). Over residues 918-927 (RHTHTSRKKH) the composition is skewed to basic residues. Basic and acidic residues-rich tracts occupy residues 928–939 (TLEQKTDTRENP), 1000–1019 (KKQEEARREYPLSPDGHLHR), 1083–1093 (PEERSGRRLAD), and 1105–1114 (TDLEREDSIS). Ser1012 is subject to Phosphoserine.

It is found in the nucleus. In terms of biological role, acts as a mediator of epithelial dynamics and organ branching by promoting cleft progression. Induced following accumulation of fibronectin in forming clefts, leading to local expression of the cell-scattering SNAIL2 and suppression of E-cadherin levels, thereby altering cell morphology and reducing cell-cell adhesion. This stimulates cell separation at the base of forming clefts by local, dynamic intercellular gap formation and promotes cleft progression. The chain is BTB/POZ domain-containing protein 7 (BTBD7) from Homo sapiens (Human).